Here is a 544-residue protein sequence, read N- to C-terminus: Chaperonin GroEL (544 aa).

ATP contacts are provided by residues 30 to 33 (TLGP), Lys-51, 87 to 91 (DGTTT), Gly-415, 480 to 482 (DAA), and Asp-496.

The protein belongs to the chaperonin (HSP60) family. Forms a cylinder of 14 subunits composed of two heptameric rings stacked back-to-back. Interacts with the co-chaperonin GroES.

The protein localises to the cytoplasm. The enzyme catalyses ATP + H2O + a folded polypeptide = ADP + phosphate + an unfolded polypeptide.. Together with its co-chaperonin GroES, plays an essential role in assisting protein folding. The GroEL-GroES system forms a nano-cage that allows encapsulation of the non-native substrate proteins and provides a physical environment optimized to promote and accelerate protein folding. The polypeptide is Chaperonin GroEL (Sulfurihydrogenibium sp. (strain YO3AOP1)).